Here is a 554-residue protein sequence, read N- to C-terminus: Carboxypeptidase Y homolog A (554 aa).

Residues M1–S17 form the signal peptide. Residues A18–K137 constitute a propeptide that is removed on maturation. Intrachain disulfides connect C191–C431, C325–C339, C349–C372, C356–C365, and C394–C401. A glycan (N-linked (GlcNAc...) asparagine) is linked at N222. The active site involves S278. D470 is a catalytic residue. N-linked (GlcNAc...) asparagine glycosylation is present at N518. H529 is an active-site residue.

The protein belongs to the peptidase S10 family.

It localises to the vacuole. The enzyme catalyses Release of a C-terminal amino acid with broad specificity.. Its function is as follows. Vacuolar carboxypeptidase involved in degradation of small peptides. Digests preferentially peptides containing an aliphatic or hydrophobic residue in P1' position, as well as methionine, leucine or phenylalanine in P1 position of ester substrate. This Neurospora crassa (strain ATCC 24698 / 74-OR23-1A / CBS 708.71 / DSM 1257 / FGSC 987) protein is Carboxypeptidase Y homolog A (cpyA).